The sequence spans 91 residues: MAHKKGVGSSKNGRDSNPKYLGVKKFGGEVVKAGNILVRQRGTKFKAGQGVGMGRDHTLFALSDGKVVFINKGKGARFISIEAAQTEVAAD.

Belongs to the bacterial ribosomal protein bL27 family. In terms of assembly, part of the 50S ribosomal subunit. Contacts protein L18.

In terms of biological role, binds the 5S and 23S rRNAs and also the tRNA in the P site. The protein is Large ribosomal subunit protein bL27 (rpmA) of Deinococcus radiodurans (strain ATCC 13939 / DSM 20539 / JCM 16871 / CCUG 27074 / LMG 4051 / NBRC 15346 / NCIMB 9279 / VKM B-1422 / R1).